The primary structure comprises 438 residues: Glutamine synthetase (438 aa).

Residues 14 to 98 (EEVEYVDIRF…VHCNVVEPDT (85 aa)) enclose the GS beta-grasp domain. The 333-residue stretch at 106-438 (PRIALKAEAY…LAGDVFTKDQ (333 aa)) folds into the GS catalytic domain. 2 residues coordinate Mg(2+): glutamate 130 and glutamate 132. Residue aspartate 208 coordinates ATP. Residues glutamate 213 and glutamate 220 each contribute to the Mg(2+) site. L-glutamate contacts are provided by residues 264–265 (NG) and glycine 265. Histidine 269 is a Mg(2+) binding site. Residues 271–273 (NMS) and serine 273 each bind ATP. L-glutamate contacts are provided by arginine 321, glutamate 327, and arginine 339. Residues arginine 339, arginine 344, and lysine 352 each contribute to the ATP site. Glutamate 357 contacts Mg(2+). Arginine 359 contacts L-glutamate. Tyrosine 397 bears the O-AMP-tyrosine mark.

The protein belongs to the glutamine synthetase family. Oligomer of 12 subunits arranged in the form of two hexameric ring. Mg(2+) serves as cofactor.

Its subcellular location is the cytoplasm. It carries out the reaction L-glutamate + NH4(+) + ATP = L-glutamine + ADP + phosphate + H(+). With respect to regulation, the activity of this enzyme could be controlled by adenylation under conditions of abundant glutamine. Functionally, catalyzes the ATP-dependent biosynthesis of glutamine from glutamate and ammonia. In Rhodobacter capsulatus (Rhodopseudomonas capsulata), this protein is Glutamine synthetase.